The chain runs to 438 residues: Coenzyme A disulfide reductase (438 aa).

Residue 8 to 33 (GAVAGGATCASQIRRLDKESEIIVFE) participates in FAD binding. Substrate contacts are provided by threonine 15, glutamine 19, arginine 22, serine 39, and asparagine 42. Residue cysteine 43 is the Nucleophile of the active site. The active-site Redox-active is cysteine 43. Lysine 71 is a substrate binding site. NADP(+) is bound at residue 151–166 (ALVVGAGYISLEVLEN). 267-277 (TNIPNIYALGD) is an FAD binding site. Residue histidine 299 coordinates substrate. FAD is bound at residue tyrosine 419. Lysine 427 is a binding site for substrate.

The protein belongs to the class-III pyridine nucleotide-disulfide oxidoreductase family. In terms of assembly, homodimer. It depends on FAD as a cofactor.

It catalyses the reaction NADP(+) + 2 CoA = CoA-disulfide + NADPH + H(+). Functionally, catalyzes specifically the NADPH-dependent reduction of coenzyme A disulfide. The sequence is that of Coenzyme A disulfide reductase from Staphylococcus epidermidis (strain ATCC 35984 / DSM 28319 / BCRC 17069 / CCUG 31568 / BM 3577 / RP62A).